The sequence spans 403 residues: Tryptophan synthase beta chain (403 aa).

Lys88 bears the N6-(pyridoxal phosphate)lysine mark.

It belongs to the TrpB family. In terms of assembly, tetramer of two alpha and two beta chains. Pyridoxal 5'-phosphate is required as a cofactor.

It carries out the reaction (1S,2R)-1-C-(indol-3-yl)glycerol 3-phosphate + L-serine = D-glyceraldehyde 3-phosphate + L-tryptophan + H2O. Its pathway is amino-acid biosynthesis; L-tryptophan biosynthesis; L-tryptophan from chorismate: step 5/5. Functionally, the beta subunit is responsible for the synthesis of L-tryptophan from indole and L-serine. The protein is Tryptophan synthase beta chain of Shewanella frigidimarina (strain NCIMB 400).